We begin with the raw amino-acid sequence, 328 residues long: 2-hydroxyisoflavanone dehydratase (328 aa).

Positions 85–87 (HGG) match the Involved in the stabilization of the negatively charged intermediate by the formation of the oxyanion hole motif. Catalysis depends on residues threonine 173, aspartate 272, and histidine 304.

The protein belongs to the 'GDXG' lipolytic enzyme family.

It catalyses the reaction (2R,3S)-2,4',7-trihydroxyisoflavanone = daidzein + H2O + H(+). The catalysed reaction is 2-hydroxy-2,3-dihydrogenistein = genistein + H2O + H(+). It carries out the reaction a carboxylic ester + H2O = an alcohol + a carboxylate + H(+). It participates in secondary metabolite biosynthesis; flavonoid biosynthesis. Functionally, dehydratase that mediates the biosynthesis of isoflavonoids. Can better use 2,7-dihydroxy-4'-methoxyisoflavanone as substrate. Has also a slight carboxylesterase activity toward p-nitrophenyl butyrate. In Glycyrrhiza echinata (Licorice), this protein is 2-hydroxyisoflavanone dehydratase (HIDM).